The sequence spans 612 residues: Putative zinc metalloproteinase C607.06c (612 aa).

His-303 is a Zn(2+) binding site. Glu-304 is an active-site residue. Positions 307 and 313 each coordinate Zn(2+). Residues 477 to 612 form the Jacalin-type lectin domain; it reads VYRSERYGLR…FMDSIGFFIK (136 aa).

It belongs to the peptidase M10B family. The cofactor is Zn(2+).

In Schizosaccharomyces pombe (strain 972 / ATCC 24843) (Fission yeast), this protein is Putative zinc metalloproteinase C607.06c.